The following is a 741-amino-acid chain: Catalase-peroxidase (741 aa).

An N-terminal signal peptide occupies residues 1–23 (MLKKIITALGMSGMLLASSNAIA). Positions 102 to 223 (WHDAGTYRIY…YAATQMGLIY (122 aa)) form a cross-link, tryptophyl-tyrosyl-methioninium (Trp-Tyr) (with M-249). Histidine 103 acts as the Proton acceptor in catalysis. The segment at residues 223–249 (YVNPEGPDGKPDIKGAASEIRQAFRAM) is a cross-link (tryptophyl-tyrosyl-methioninium (Tyr-Met) (with W-102)). Histidine 264 is a heme b binding site.

Belongs to the peroxidase family. Peroxidase/catalase subfamily. In terms of assembly, homodimer or homotetramer. Heme b is required as a cofactor. Post-translationally, formation of the three residue Trp-Tyr-Met cross-link is important for the catalase, but not the peroxidase activity of the enzyme.

The catalysed reaction is H2O2 + AH2 = A + 2 H2O. It carries out the reaction 2 H2O2 = O2 + 2 H2O. Functionally, bifunctional enzyme with both catalase and broad-spectrum peroxidase activity. In Francisella tularensis subsp. holarctica (strain FTNF002-00 / FTA), this protein is Catalase-peroxidase.